The primary structure comprises 379 residues: S-adenosylmethionine:tRNA ribosyltransferase-isomerase (379 aa).

The disordered stretch occupies residues 35-58 (AESRPHAESVPHAESRPHAESAFS).

It belongs to the QueA family. In terms of assembly, monomer.

The protein resides in the cytoplasm. The enzyme catalyses 7-aminomethyl-7-carbaguanosine(34) in tRNA + S-adenosyl-L-methionine = epoxyqueuosine(34) in tRNA + adenine + L-methionine + 2 H(+). Its pathway is tRNA modification; tRNA-queuosine biosynthesis. Functionally, transfers and isomerizes the ribose moiety from AdoMet to the 7-aminomethyl group of 7-deazaguanine (preQ1-tRNA) to give epoxyqueuosine (oQ-tRNA). The sequence is that of S-adenosylmethionine:tRNA ribosyltransferase-isomerase from Rhizobium leguminosarum bv. trifolii (strain WSM2304).